A 212-amino-acid polypeptide reads, in one-letter code: Imidazole glycerol phosphate synthase subunit HisH (212 aa).

Positions 3–208 (RIVIVDYGMG…GRMVCDLIST (206 aa)) constitute a Glutamine amidotransferase type-1 domain. Cys81 acts as the Nucleophile in catalysis. Catalysis depends on residues His183 and Glu185.

In terms of assembly, heterodimer of HisH and HisF.

It is found in the cytoplasm. It catalyses the reaction 5-[(5-phospho-1-deoxy-D-ribulos-1-ylimino)methylamino]-1-(5-phospho-beta-D-ribosyl)imidazole-4-carboxamide + L-glutamine = D-erythro-1-(imidazol-4-yl)glycerol 3-phosphate + 5-amino-1-(5-phospho-beta-D-ribosyl)imidazole-4-carboxamide + L-glutamate + H(+). It carries out the reaction L-glutamine + H2O = L-glutamate + NH4(+). It participates in amino-acid biosynthesis; L-histidine biosynthesis; L-histidine from 5-phospho-alpha-D-ribose 1-diphosphate: step 5/9. IGPS catalyzes the conversion of PRFAR and glutamine to IGP, AICAR and glutamate. The HisH subunit catalyzes the hydrolysis of glutamine to glutamate and ammonia as part of the synthesis of IGP and AICAR. The resulting ammonia molecule is channeled to the active site of HisF. The sequence is that of Imidazole glycerol phosphate synthase subunit HisH from Symbiobacterium thermophilum (strain DSM 24528 / JCM 14929 / IAM 14863 / T).